Reading from the N-terminus, the 123-residue chain is MTTSSYFLLVALGLLLYVCQSSFGGEHVCWLDDPNHPEGICGPQVSDIVEIRCEEKEAEQGGANNARAYTGRTSSLMKRRGFLSLLKKRGKRDEGSLQRSGRGIVCECCKHHCTKEELTEYCH.

An N-terminal signal peptide occupies residues 1–24 (MTTSSYFLLVALGLLLYVCQSSFG). 4 cysteine pairs are disulfide-bonded: C29–C106, C41–C109, C53–C122, and C108–C113. P34 carries the 4-hydroxyproline; partial modification. Residues 59–102 (EQGGANNARAYTGRTSSLMKRRGFLSLLKKRGKRDEGSLQRSGR) constitute a propeptide, c peptide. A 4-carboxyglutamate modification is found at E107. Residue E117 is modified to 4-carboxyglutamate; partial.

The protein belongs to the insulin family. As to quaternary structure, heterodimer of A and B chains; disulfide-linked. As to expression, expressed by the venom duct.

It is found in the secreted. Functionally, this venom insulin facilitates prey capture by rapidly inducing hypoglycemic shock. Intraperitoneal injection of this peptide into zebrafish lowers blood glucose with the same potency than human insulin. In vivo, when applied to water, this peptide reduces overall locomotor activity of zebrafish larvae, observed as a significant decrease in the percentage of time spent swimming and movement frequency. This chain is Insulin-like peptide-1, found in Conus victoriae (Queen Victoria cone).